Here is a 157-residue protein sequence, read N- to C-terminus: DNA gyrase inhibitor 2 (157 aa).

The protein belongs to the DNA gyrase inhibitor family. Interacts with DNA gyrase.

It localises to the cytoplasm. Its function is as follows. Inhibits the supercoiling activity of DNA gyrase. Acts by inhibiting DNA gyrase at an early step, prior to (or at the step of) binding of DNA by the gyrase. It protects cells against toxins that target DNA gyrase, by inhibiting activity of these toxins and reducing the formation of lethal double-strand breaks in the cell. This Dickeya dadantii (strain 3937) (Erwinia chrysanthemi (strain 3937)) protein is DNA gyrase inhibitor 2.